The primary structure comprises 320 residues: Olfactory receptor 2AT4 (320 aa).

Over 1–31 (MDATACNESVDGSPVFYLLGIPSLPETFFLP) the chain is Extracellular. Residue Asn-7 is glycosylated (N-linked (GlcNAc...) asparagine). Residues 32–52 (VFFIFLLFYLLILMGNALILV) form a helical membrane-spanning segment. The Cytoplasmic portion of the chain corresponds to 53 to 62 (AVVAEPSLHK). A helical transmembrane segment spans residues 63-83 (PMYFFLINLSTLDILFTTTTV). Over 84–102 (PKMLSLFLLGDRFLSFSSC) the chain is Extracellular. A disulfide bridge links Cys-102 with Cys-184. Residues 103-123 (LLQMYLFQSFTCSEAFILVVM) form a helical membrane-spanning segment. Topologically, residues 124–145 (AYDRYVAICHPLHYPVLMNPQT) are cytoplasmic. The helical transmembrane segment at 146–166 (NATLAASAWLTALLLPIPAVV) threads the bilayer. Residues 167–200 (RTSQMAYNSIAYIYHCFCDHLAVVQASCSDTTPQ) are Extracellular-facing. The chain crosses the membrane as a helical span at residues 201–221 (TLMGFCIAMVVSFLPLLLVLL). The Cytoplasmic portion of the chain corresponds to 222 to 245 (SYVHILASVLRISSLEGRAKAFST). A helical transmembrane segment spans residues 246 to 266 (CSSHLLVVGTYYSSIAIAYVA). The Extracellular segment spans residues 267–276 (YRADLPLDFH). The helical transmembrane segment at 277 to 297 (IMGNVVYAILTPILNPLIYTL) threads the bilayer. Residues 298 to 320 (RNRDVKAAITKIMSQDPGCDRSI) are Cytoplasmic-facing.

Belongs to the G-protein coupled receptor 1 family. Detected in the keratinocytes of the epidermis (at protein level). Detected in hair follicles in proximal outer root sheath and hair matrix keratinocytes (at protein level).

Its subcellular location is the cell membrane. In terms of biological role, olfactory receptor. Activated by the synthetic sandalwood odorant sandalore. Endogenous ligand is unknown. The activity of this receptor is probably mediated by G proteins which induce elevation of intracellular Ca(2+), a cAMP-dependent pathway and phosphorylation of MAPK1/ERK2, MAPK3/ERK1 and p38 MAPKs. Activation of OR2AT4 induces proliferation, migration, and re-epithelialization during wound-healing processes of keratinocytes. Stimulation of OR2AT4 by sandalore promotes hair growth by decreasing apoptosis and increasing production of the anagen-prolonging growth factor IGF1 as well as other pathways involving various kinases. The protein is Olfactory receptor 2AT4 of Homo sapiens (Human).